The sequence spans 604 residues: Aspartate--tRNA(Asp/Asn) ligase (604 aa).

Glu187 provides a ligand contact to L-aspartate. The interval 211–214 is aspartate; sequence QQFK. L-aspartate is bound by residues Arg233 and His461. An ATP-binding site is contributed by 233-235; the sequence is RDE. ATP is bound at residue Glu495. Residue Arg502 coordinates L-aspartate. ATP is bound at residue 547–550; it reads GLDR.

Belongs to the class-II aminoacyl-tRNA synthetase family. Type 1 subfamily. In terms of assembly, homodimer.

The protein resides in the cytoplasm. It carries out the reaction tRNA(Asx) + L-aspartate + ATP = L-aspartyl-tRNA(Asx) + AMP + diphosphate. Functionally, aspartyl-tRNA synthetase with relaxed tRNA specificity since it is able to aspartylate not only its cognate tRNA(Asp) but also tRNA(Asn). Reaction proceeds in two steps: L-aspartate is first activated by ATP to form Asp-AMP and then transferred to the acceptor end of tRNA(Asp/Asn). This Chlorobium luteolum (strain DSM 273 / BCRC 81028 / 2530) (Pelodictyon luteolum) protein is Aspartate--tRNA(Asp/Asn) ligase.